The primary structure comprises 361 residues: Phosphoserine aminotransferase (361 aa).

L-glutamate is bound at residue R42. Residues 76-77 (AR), W102, T153, D173, and Q196 each bind pyridoxal 5'-phosphate. At K197 the chain carries N6-(pyridoxal phosphate)lysine. 238–239 (NT) serves as a coordination point for pyridoxal 5'-phosphate.

This sequence belongs to the class-V pyridoxal-phosphate-dependent aminotransferase family. SerC subfamily. As to quaternary structure, homodimer. Requires pyridoxal 5'-phosphate as cofactor.

It is found in the cytoplasm. The catalysed reaction is O-phospho-L-serine + 2-oxoglutarate = 3-phosphooxypyruvate + L-glutamate. The enzyme catalyses 4-(phosphooxy)-L-threonine + 2-oxoglutarate = (R)-3-hydroxy-2-oxo-4-phosphooxybutanoate + L-glutamate. The protein operates within amino-acid biosynthesis; L-serine biosynthesis; L-serine from 3-phospho-D-glycerate: step 2/3. Its pathway is cofactor biosynthesis; pyridoxine 5'-phosphate biosynthesis; pyridoxine 5'-phosphate from D-erythrose 4-phosphate: step 3/5. Functionally, catalyzes the reversible conversion of 3-phosphohydroxypyruvate to phosphoserine and of 3-hydroxy-2-oxo-4-phosphonooxybutanoate to phosphohydroxythreonine. The chain is Phosphoserine aminotransferase from Yersinia pseudotuberculosis serotype IB (strain PB1/+).